The chain runs to 182 residues: Ribosome-recycling factor (182 aa).

The protein belongs to the RRF family.

The protein localises to the cytoplasm. Its function is as follows. Responsible for the release of ribosomes from messenger RNA at the termination of protein biosynthesis. May increase the efficiency of translation by recycling ribosomes from one round of translation to another. The polypeptide is Ribosome-recycling factor (Gloeobacter violaceus (strain ATCC 29082 / PCC 7421)).